A 367-amino-acid chain; its full sequence is Embryonic developmental protein tofu-6 (367 aa).

The region spanning A13–N92 is the RRM domain. The required for ife-3 interaction stretch occupies residues K298–A345.

As to quaternary structure, component of the pid-1 variant of the PETISCO complex (also called the pid-3, erh-2, tofu-6, and ife-3 small RNA complex) containing at least pid-1, tofu-6, ife-3, pid-3, and erh-2, which is required for the biogenesis of 21 nucleotide PIWI-interacting RNAs (piRNAs) that possess a uracil residue at the 5'-end (also called 21U-RNAs). Within the pid-1 variant of the PETISCO complex interacts with pid-1. Component of the tost-1 variant of the PETISCO complex (also called the pid-3, erh-2, tofu-6, and ife-3 small RNA complex) containing at least tost-1, tofu-6, ife-3, pid-3, and erh-2, which plays an essential role in embryogenesis. Within the tost-1 variant of the PETISCO complex interacts with tost-1. Within the pid-1 and tost-1 variants of the PETISCO complexes interacts (via C-terminus) with ife-3. Within the pid-1 and tost-1 variants of the PETISCO complexes interacts (via the RRM domain) with pid-3. Within the pid-1 and tost-1 variants of the PETISCO complexes interacts (via the RRM domain) with erh-2. In contrast to the pid-1 variant of the PETISCO complex, the tost-1 variant of the PETISCO complex plays a minor role in the biogenesis of 21U-RNAs. Interacts (via residues 120-314) with the PUCH complex subunit tofu-1 (via residues 82-172); the interaction between the PETISCO and PUCH complex members enhances piRNA production in vivo. In terms of tissue distribution, expression is restricted to the germline (at protein level).

The protein resides in the cytoplasm. It is found in the perinuclear region. Its subcellular location is the nucleus. Its function is as follows. Component of the pid-1 and tost-1 variants of the PETISCO complexes, which have roles in the biogenesis of a class of 21 nucleotide PIWI-interacting RNAs (piRNAs) that possess a uracil residue at the 5'-end (also called 21U-RNAs) and embryogenesis, respectively. Promotes the biogenesis of 21U-RNAs. Mediates the interaction between the PETISCO complex and the PUCH complex, the endoribonuclease complex processing the 5'-end of precursor piRNAs, thereby enhancing mature piRNA production. Required for chromosome segregation and cell division in early embryos. May have a role in DNA replication. The polypeptide is Embryonic developmental protein tofu-6 (Caenorhabditis elegans).